A 427-amino-acid polypeptide reads, in one-letter code: Trigger factor (427 aa).

The 86-residue stretch at 163 to 248 (GDTVVIDFVG…IHEVKTKEVP (86 aa)) folds into the PPIase FKBP-type domain.

This sequence belongs to the FKBP-type PPIase family. Tig subfamily.

It is found in the cytoplasm. The enzyme catalyses [protein]-peptidylproline (omega=180) = [protein]-peptidylproline (omega=0). Its function is as follows. Involved in protein export. Acts as a chaperone by maintaining the newly synthesized protein in an open conformation. Functions as a peptidyl-prolyl cis-trans isomerase. The chain is Trigger factor from Streptococcus agalactiae serotype V (strain ATCC BAA-611 / 2603 V/R).